The following is a 170-amino-acid chain: Adenine phosphoribosyltransferase (170 aa).

The protein belongs to the purine/pyrimidine phosphoribosyltransferase family. As to quaternary structure, homodimer.

It is found in the cytoplasm. It catalyses the reaction AMP + diphosphate = 5-phospho-alpha-D-ribose 1-diphosphate + adenine. It functions in the pathway purine metabolism; AMP biosynthesis via salvage pathway; AMP from adenine: step 1/1. In terms of biological role, catalyzes a salvage reaction resulting in the formation of AMP, that is energically less costly than de novo synthesis. This Oceanobacillus iheyensis (strain DSM 14371 / CIP 107618 / JCM 11309 / KCTC 3954 / HTE831) protein is Adenine phosphoribosyltransferase.